A 238-amino-acid polypeptide reads, in one-letter code: Small ribosomal subunit protein uS2 (238 aa).

Belongs to the universal ribosomal protein uS2 family.

This chain is Small ribosomal subunit protein uS2, found in Prochlorococcus marinus (strain MIT 9211).